A 288-amino-acid chain; its full sequence is Pyruvate synthase subunit PorB (288 aa).

Residues Cys16, Cys19, and Cys44 each coordinate [4Fe-4S] cluster. Residues 137–148 (STPYGASTTTSP) are compositionally biased toward polar residues. A disordered region spans residues 137-159 (STPYGASTTTSPHGKESFGEDRP). Basic and acidic residues predominate over residues 149–159 (HGKESFGEDRP). Residue Cys208 coordinates [4Fe-4S] cluster.

Heterotetramer of one alpha, one beta, one delta and one gamma chain. It depends on [4Fe-4S] cluster as a cofactor.

It carries out the reaction 2 oxidized [2Fe-2S]-[ferredoxin] + pyruvate + CoA = 2 reduced [2Fe-2S]-[ferredoxin] + acetyl-CoA + CO2 + H(+). This Methanothermobacter marburgensis (strain ATCC BAA-927 / DSM 2133 / JCM 14651 / NBRC 100331 / OCM 82 / Marburg) (Methanobacterium thermoautotrophicum) protein is Pyruvate synthase subunit PorB (porB).